We begin with the raw amino-acid sequence, 373 residues long: GDP-mannose 4,6-dehydratase (373 aa).

NADP(+) is bound by residues 9–14, 64–65, 86–90, and Y101; these read GVTGQD, DL, and LGAMS. The active site involves T133. Active-site nucleophile residues include E135 and Y157. Positions 161, 187, and 192 each coordinate NADP(+).

This sequence belongs to the NAD(P)-dependent epimerase/dehydratase family. GDP-mannose 4,6-dehydratase subfamily. Requires NADP(+) as cofactor.

The enzyme catalyses GDP-alpha-D-mannose = GDP-4-dehydro-alpha-D-rhamnose + H2O. It participates in nucleotide-sugar biosynthesis; GDP-L-fucose biosynthesis via de novo pathway; GDP-L-fucose from GDP-alpha-D-mannose: step 1/2. Its function is as follows. Catalyzes the conversion of GDP-D-mannose to GDP-4-dehydro-6-deoxy-D-mannose. The sequence is that of GDP-mannose 4,6-dehydratase from Escherichia coli O157:H7.